Reading from the N-terminus, the 107-residue chain is UPF0145 protein BH1111 (107 aa).

The protein belongs to the UPF0145 family.

The polypeptide is UPF0145 protein BH1111 (Halalkalibacterium halodurans (strain ATCC BAA-125 / DSM 18197 / FERM 7344 / JCM 9153 / C-125) (Bacillus halodurans)).